An 88-amino-acid chain; its full sequence is U24 protein (88 aa).

Threonine 6 carries the post-translational modification Phosphothreonine. Positions 8–11 (PPSY) match the PPXY motif motif. The helical transmembrane segment at 58–78 (FAFLVLTGLAIAMILFIAFVI) threads the bilayer.

As to quaternary structure, interacts with host ITCH; this interaction probably mediates ITCH degradation. Interacts probably with NEDD4.

Its subcellular location is the membrane. Its function is as follows. Down-regulates the TCR/CD3E complex and the transferrin receptor TFRC in host T-cells by blocking them from recycling back to the cell surface. The sequence is that of U24 protein (U24) from Human herpesvirus 6B (strain Z29) (HHV-6 variant B).